A 261-amino-acid polypeptide reads, in one-letter code: CD40 ligand (261 aa).

Residues 1–22 (MIETYNQTSPRSAATGLPISMK) lie on the Cytoplasmic side of the membrane. A helical; Signal-anchor for type II membrane protein transmembrane segment spans residues 23–46 (IFMYLLTVFLITQMIGSALFAVYL). The Extracellular portion of the chain corresponds to 47–261 (HRRLDKIEDE…GFTSFGLLKL (215 aa)). Residues 122–261 (IAAHVISEAS…GFTSFGLLKL (140 aa)) form the THD domain. A disulfide bond links Cys178 and Cys218. A glycan (N-linked (GlcNAc...) (complex) asparagine; alternate) is linked at Asn240. The N-linked (GlcNAc...) (high mannose) asparagine; alternate glycan is linked to Asn240.

The protein belongs to the tumor necrosis factor family. In terms of assembly, homotrimer. Interacts with isoform 3 of CD28. CD40 ligand, soluble form: Exists as either a monomer or a homotrimer. Forms a ternary complex between CD40 and integrins for CD40-CD40LG signaling. In terms of processing, the soluble form derives from the membrane form by proteolytic processing. N-linked glycan is a mixture of high mannose and complex type. Glycan structure does not influence binding affinity to CD40. Post-translationally, not O-glycosylated. As to expression, specifically expressed on activated CD4+ T-lymphocytes.

The protein resides in the cell membrane. Its subcellular location is the cell surface. The protein localises to the secreted. Its function is as follows. Cytokine that acts as a ligand to CD40/TNFRSF5. Costimulates T-cell proliferation and cytokine production. Its cross-linking on T-cells generates a costimulatory signal which enhances the production of IL4 and IL10 in conjunction with the TCR/CD3 ligation and CD28 costimulation. Induces the activation of NF-kappa-B. Induces the activation of kinases MAPK8 and PAK2 in T-cells. Induces tyrosine phosphorylation of isoform 3 of CD28. Mediates B-cell proliferation in the absence of co-stimulus as well as IgE production in the presence of IL4. Involved in immunoglobulin class switching. Functionally, acts as a ligand for integrins, specifically ITGA5:ITGB1 and ITGAV:ITGB3; both integrins and the CD40 receptor are required for activation of CD40-CD40LG signaling, which have cell-type dependent effects, such as B-cell activation, NF-kappa-B signaling and anti-apoptotic signaling. In Homo sapiens (Human), this protein is CD40 ligand (CD40LG).